The primary structure comprises 741 residues: Alpha-1,6-mannosylglycoprotein 6-beta-N-acetylglucosaminyltransferase A (741 aa).

The Cytoplasmic segment spans residues 1-13; sequence MALFTPWKLSSQK. The chain crosses the membrane as a helical; Signal-anchor for type II membrane protein span at residues 14 to 30; it reads LGFFLVTFGFIWGMMLL. Topologically, residues 31 to 741 are lumenal; that stretch reads HFTIQQRTQP…GQVALCKDCL (711 aa). Asparagine 110, asparagine 115, and asparagine 118 each carry an N-linked (GlcNAc...) asparagine glycan. Cystine bridges form between cysteine 145–cysteine 183, cysteine 156–cysteine 196, cysteine 172–cysteine 338, cysteine 372–cysteine 626, cysteine 649–cysteine 724, cysteine 653–cysteine 726, cysteine 660–cysteine 713, cysteine 681–cysteine 702, and cysteine 737–cysteine 740. The tract at residues 213–741 is sufficient for catalytic activity; sequence NSLAEIRTDF…GQVALCKDCL (529 aa). The tract at residues 264-269 is important for activity in FGF2 release; it reads KRKRKK. The N-linked (GlcNAc...) asparagine glycan is linked to asparagine 334. 378–379 serves as a coordination point for substrate; that stretch reads DS. 2 N-linked (GlcNAc...) asparagine glycosylation sites follow: asparagine 433 and asparagine 447. Residue glutamate 526 participates in UDP-N-acetyl-alpha-D-glucosamine binding. Residue lysine 554 coordinates substrate.

It belongs to the glycosyltransferase 18 family. N-glycosylated. Post-translationally, a secreted form is released from the membrane after cleavage by gamma-secretase.

It is found in the golgi apparatus membrane. The protein resides in the secreted. The enzyme catalyses N(4)-{beta-D-GlcNAc-(1-&gt;2)-[beta-D-GlcNAc-(1-&gt;4)]-alpha-D-Man-(1-&gt;3)-[beta-D-GlcNAc-(1-&gt;2)-alpha-D-Man-(1-&gt;6)]-beta-D-Man-(1-&gt;4)-beta-D-GlcNAc-(1-&gt;4)-beta-D-GlcNAc}-L-asparaginyl-[protein] + UDP-N-acetyl-alpha-D-glucosamine = N(4)-{beta-D-GlcNAc-(1-&gt;2)-[beta-D-GlcNAc-(1-&gt;4)]-alpha-D-Man-(1-&gt;3)-[beta-D-GlcNAc-(1-&gt;2)-[beta-D-GlcNAc-(1-&gt;6)]-alpha-D-Man-(1-&gt;6)]-beta-D-Man-(1-&gt;4)-beta-D-GlcNAc-(1-&gt;4)-beta-D-GlcNAc}-L-asparaginyl-[protein] + UDP + H(+). The protein operates within protein modification; protein glycosylation. Activity is increased by Mn(2+) and Mg(2+). Functionally, catalyzes the addition of N-acetylglucosamine (GlcNAc) in beta 1-6 linkage to the alpha-linked mannose of biantennary N-linked oligosaccharides. Catalyzes an important step in the biosynthesis of branched, complex-type N-glycans, such as those found on EGFR, TGFR (TGF-beta receptor) and CDH2. Via its role in the biosynthesis of complex N-glycans, plays an important role in the activation of cellular signaling pathways, reorganization of the actin cytoskeleton, cell-cell adhesion and cell migration. MGAT5-dependent EGFR N-glycosylation enhances the interaction between EGFR and LGALS3 and thereby prevents rapid EGFR endocytosis and prolongs EGFR signaling. Required for efficient interaction between TGFB1 and its receptor. Enhances activation of intracellular signaling pathways by several types of growth factors, including FGF2, PDGF, IGF, TGFB1 and EGF. MGAT5-dependent CDH2 N-glycosylation inhibits CDH2-mediated homotypic cell-cell adhesion and contributes to the regulation of downstream signaling pathways. Promotes cell migration. Contributes to the regulation of the inflammatory response. MGAT5-dependent TCR N-glycosylation enhances the interaction between TCR and LGALS3, limits agonist-induced TCR clustering, and thereby dampens TCR-mediated responses to antigens. Required for normal leukocyte evasation and accumulation at sites of inflammation. Inhibits attachment of monocytes to the vascular endothelium and subsequent monocyte diapedesis. Its function is as follows. Promotes proliferation of umbilical vein endothelial cells and angiogenesis, at least in part by promoting the release of the growth factor FGF2 from the extracellular matrix. The chain is Alpha-1,6-mannosylglycoprotein 6-beta-N-acetylglucosaminyltransferase A (MGAT5) from Homo sapiens (Human).